The primary structure comprises 217 residues: Protein OPI10 homolog (217 aa).

The protein belongs to the OPI10 family.

This chain is Protein OPI10 homolog, found in Dictyostelium discoideum (Social amoeba).